The primary structure comprises 147 residues: Phospholipase A2 SSD387 (147 aa).

A signal peptide spans 1–19 (MSPKFLLFSIIAVWSCAAA). Positions 20-28 (IEALFIQPR) are excised as a propeptide. Cystine bridges form between C55-C71, C70-C130, C77-C123, C86-C116, and C109-C121. Positions 56 and 58 each coordinate Ca(2+). H74 is an active-site residue. Residue D75 participates in Ca(2+) binding. D124 is an active-site residue.

Ca(2+) serves as cofactor. Expressed by the venom gland.

It is found in the secreted. The enzyme catalyses a 1,2-diacyl-sn-glycero-3-phosphocholine + H2O = a 1-acyl-sn-glycero-3-phosphocholine + a fatty acid + H(+). PLA2 catalyzes the calcium-dependent hydrolysis of the 2-acyl groups in 3-sn-phosphoglycerides. This is Phospholipase A2 SSD387 from Scolopendra dehaani (Thai centipede).